Consider the following 801-residue polypeptide: Na(+)/H(+) antiporter subunit A1 (801 aa).

Transmembrane regions (helical) follow at residues 4-25 (LHIA…YRFF), 30-49 (LGWF…LTLI), 79-101 (LGLL…SIGY), 108-127 (LGNF…GVVL), 131-153 (VIIL…SFWR), 166-188 (LIIT…IPTQ), 208-230 (FIFA…PFYI), 243-265 (SAYL…MTPI), 270-289 (QGWI…WASL), 302-324 (AFST…ISYH), 339-361 (AAIF…TGAV), 373-395 (LGGL…LSMA), 429-451 (YLFP…KFIM), 472-494 (ILML…FPGI), 526-548 (AFLS…SYWV), 589-611 (NNLV…SVPF), 621-641 (IRIF…LILF), 646-668 (LFSI…FFKA), 672-694 (ALTQ…YHLP), 707-729 (LTNA…IAYG), and 767-784 (LFES…YTMI).

Belongs to the CPA3 antiporters (TC 2.A.63) subunit A family. As to quaternary structure, may form a heterooligomeric complex that consists of seven subunits: mnhA1, mnhB1, mnhC1, mnhD1, mnhE1, mnhF1 and mnhG1.

The protein resides in the cell membrane. Its activity is regulated as follows. Na(+) extrusion is completely inhibited by the H(+) conductor carbonyl cyanide m-chlorophenylhydrazone (CCCP). Mnh complex is a Na(+)/H(+) antiporter involved in Na(+) excretion. The sequence is that of Na(+)/H(+) antiporter subunit A1 (mnhA1) from Staphylococcus aureus (strain MRSA252).